A 371-amino-acid polypeptide reads, in one-letter code: Transposase for insertion sequence element IS421 (371 aa).

This sequence belongs to the transposase 11 family.

Its function is as follows. Involved in the transposition of the insertion sequence IS421. The protein is Transposase for insertion sequence element IS421 of Escherichia coli.